We begin with the raw amino-acid sequence, 288 residues long: Ribosomal RNA small subunit methyltransferase A (288 aa).

N37, L39, G64, E86, D112, and N131 together coordinate S-adenosyl-L-methionine.

This sequence belongs to the class I-like SAM-binding methyltransferase superfamily. rRNA adenine N(6)-methyltransferase family. RsmA subfamily.

Its subcellular location is the cytoplasm. It catalyses the reaction adenosine(1518)/adenosine(1519) in 16S rRNA + 4 S-adenosyl-L-methionine = N(6)-dimethyladenosine(1518)/N(6)-dimethyladenosine(1519) in 16S rRNA + 4 S-adenosyl-L-homocysteine + 4 H(+). In terms of biological role, specifically dimethylates two adjacent adenosines (A1518 and A1519) in the loop of a conserved hairpin near the 3'-end of 16S rRNA in the 30S particle. May play a critical role in biogenesis of 30S subunits. The protein is Ribosomal RNA small subunit methyltransferase A of Rhodospirillum rubrum (strain ATCC 11170 / ATH 1.1.1 / DSM 467 / LMG 4362 / NCIMB 8255 / S1).